Here is a 277-residue protein sequence, read N- to C-terminus: Large ribosomal subunit protein uL2 (277 aa).

Residues 222-277 form a disordered region; the sequence is GVAMNPVDHPHGGGEGRTSGGRHPVTPWGKPTKGKKTRSNKATDKFIMRSRHQRKK.

This sequence belongs to the universal ribosomal protein uL2 family. In terms of assembly, part of the 50S ribosomal subunit. Forms a bridge to the 30S subunit in the 70S ribosome.

Its function is as follows. One of the primary rRNA binding proteins. Required for association of the 30S and 50S subunits to form the 70S ribosome, for tRNA binding and peptide bond formation. It has been suggested to have peptidyltransferase activity; this is somewhat controversial. Makes several contacts with the 16S rRNA in the 70S ribosome. This is Large ribosomal subunit protein uL2 from Brucella abortus (strain S19).